Reading from the N-terminus, the 746-residue chain is MAAVQHRATTRTSNTDNSTTKTKSKATSARKSPATKRKRVSAETARAAAALKGLAVEAPAPSIEANEPGQFGRINVMDITPAEERGIFPARVELGEPFEMTAQVFIEGRTKVGATAIVRNPRGKETMRRAMTCVNPGLDRWTVMVKCGEHSDLKPWEDGYAAVKRQLGEWTVTIEGWEDAYVSWLHDARIKVRVMDDVDNALNSGAELLARWAETPDTGLTARDRKTLEKAAETMADQTLSAEDRLAAGDNPTIAALHETHPLRDGISPSQPQRFKVERPKSSFAAWYQFFPRSEGATIDPNTGKIIQGTLKTSMAGLERAAAEGFDIVYLPPVFPIGVTNRKGRNNTLVAGPDDPGSPFGIGSELGGHDTVDPLLGTMDDFKALCQRAHELGLEIALDFALQCSPDHPWVKAHPNWFRHKPDGSIAFAENPPKKYQDIYPIDFNADMPGIEKEVERIMNLWIEAGVTIFRIDNPHTKPVRFWQDVIAAVTKKHPEILFLAEAFTRPGMMRALSYVGFTQSHCYFPWRNTKDELEEYLPVTNGDDGYYQHNTFWPTTPDILTAYVRDNGVAGHCVRAVLAAMGSPSWGIYNGYELIENKQRPGFEEQIDNEKYEVKVRDWSKAKQYGVAEMLTALNKIRRAHPAALSYHNLTVLPTSDPNILAFARHTPAELTGTGQADTLIVVVNLDGHNAHQSMIHLELSELGLPTDRPLNVRDELTGREFQWGWDNYVSLAPWADVAHILSVQ.

Positions 1–43 (MAAVQHRATTRTSNTDNSTTKTKSKATSARKSPATKRKRVSAE) are disordered. Positions 10–32 (TRTSNTDNSTTKTKSKATSARKS) are enriched in low complexity. 3 residues coordinate alpha-maltose 1-phosphate: Lys-343, Gln-403, and Asp-438. The active-site Nucleophile is the Asp-473. Asn-474 contributes to the alpha-maltose 1-phosphate binding site. The active-site Proton donor is the Glu-502. 612–613 (KY) is a binding site for alpha-maltose 1-phosphate.

It belongs to the glycosyl hydrolase 13 family. GlgE subfamily. Homodimer.

The catalysed reaction is alpha-maltose 1-phosphate + [(1-&gt;4)-alpha-D-glucosyl](n) = [(1-&gt;4)-alpha-D-glucosyl](n+2) + phosphate. Maltosyltransferase that uses maltose 1-phosphate (M1P) as the sugar donor to elongate linear or branched alpha-(1-&gt;4)-glucans. Is involved in a branched alpha-glucan biosynthetic pathway from trehalose, together with TreS, Mak and GlgB. The chain is Alpha-1,4-glucan:maltose-1-phosphate maltosyltransferase from Bifidobacterium longum (strain NCC 2705).